Consider the following 259-residue polypeptide: UPF0246 protein VFMJ11_2214 (259 aa).

This sequence belongs to the UPF0246 family.

The protein is UPF0246 protein VFMJ11_2214 of Aliivibrio fischeri (strain MJ11) (Vibrio fischeri).